We begin with the raw amino-acid sequence, 173 residues long: MGIPCHFALFELQPGFRLDLEQLATRYRELARGVHPDRFADASEREQRSALEQSARLNDAYQTLKSPAQRARYLLTISGHEVPMEVTVHDPEFLLQQMQWREELEDLQDSADLAGVAAFKRRLKTAQEELNESFAACWDDAAQREQAERLMRRMQFLDKLTYEVRQLEERLDD.

Positions 5–77 (CHFALFELQP…AQRARYLLTI (73 aa)) constitute a J domain.

It belongs to the HscB family. Interacts with HscA and stimulates its ATPase activity.

Co-chaperone involved in the maturation of iron-sulfur cluster-containing proteins. Seems to help targeting proteins to be folded toward HscA. The polypeptide is Co-chaperone protein HscB homolog (Pseudomonas fluorescens (strain Pf0-1)).